Here is a 231-residue protein sequence, read N- to C-terminus: Probable GTP-binding protein EngB (231 aa).

The 181-residue stretch at 51 to 231 folds into the EngB-type G domain; that stretch reads DLSEIAFAGR…RAQLAALASP (181 aa). Residues 59-66, 86-90, 109-112, 176-179, and 210-212 each bind GTP; these read GRSNVGKS, GRTQE, DLPG, TKAD, and TSS. The Mg(2+) site is built by Ser-66 and Thr-88.

The protein belongs to the TRAFAC class TrmE-Era-EngA-EngB-Septin-like GTPase superfamily. EngB GTPase family. Mg(2+) is required as a cofactor.

In terms of biological role, necessary for normal cell division and for the maintenance of normal septation. The sequence is that of Probable GTP-binding protein EngB from Rhodospirillum rubrum (strain ATCC 11170 / ATH 1.1.1 / DSM 467 / LMG 4362 / NCIMB 8255 / S1).